The sequence spans 72 residues: Large ribosomal subunit protein bL31 (72 aa).

4 residues coordinate Zn(2+): C16, C18, C38, and C41.

The protein belongs to the bacterial ribosomal protein bL31 family. Type A subfamily. In terms of assembly, part of the 50S ribosomal subunit. Zn(2+) serves as cofactor.

Its function is as follows. Binds the 23S rRNA. The protein is Large ribosomal subunit protein bL31 of Beutenbergia cavernae (strain ATCC BAA-8 / DSM 12333 / CCUG 43141 / JCM 11478 / NBRC 16432 / NCIMB 13614 / HKI 0122).